A 431-amino-acid chain; its full sequence is Cyclic 2,3-diphosphoglycerate synthetase (431 aa).

Belongs to the cyclic 2,3-diphosphoglycerate synthetase family.

It is found in the cytoplasm. It carries out the reaction (2R)-2,3-bisphosphoglycerate + ATP + H(+) = cyclic (2R)-2,3-bisphosphoglycerate + ADP + phosphate. Functionally, catalyzes the formation of cyclic 2,3-diphosphoglycerate (cDPG) by formation of an intramolecular phosphoanhydride bond at the expense of ATP. In Pyrococcus furiosus (strain ATCC 43587 / DSM 3638 / JCM 8422 / Vc1), this protein is Cyclic 2,3-diphosphoglycerate synthetase.